A 293-amino-acid polypeptide reads, in one-letter code: MALPEHLQRHLEAGRALTAAGGYRGRFAPSPTGLLHLGNLQTALLSWLAARQAGGAWLLRIDDLDTPRNRAGAIEAIQSDLRWLGLKWDGPVLLQSERRGIYHSWLSWLRRSGRLFACRCSRRELADQPIYSGFCRQAVHNWGWQRQRLPSWRLRVADDDPHGSGDVVLRRADGFIAYQLATVIDELSFGINDVVRGADLREALPAQRSLFAALGEAPPRFRHGPLLCDASGQKLSKREACAGLKPLRDAGLDAAAVIGRLASGLQLVAPEARISATELLEHLTQQAINAVIS.

Residues 26-30 and aspartate 62 contribute to the L-glutamate site; that span reads RFAPS. Positions 29-39 match the 'HIGH' region motif; the sequence is PSPTGLLHLGN. Zn(2+) is bound by residues cysteine 118, cysteine 120, tyrosine 131, and cysteine 135. L-glutamate contacts are provided by tyrosine 178 and arginine 196. Residues 234 to 238 carry the 'KMSKS' region motif; that stretch reads KLSKR. Residue lysine 237 coordinates ATP.

This sequence belongs to the class-I aminoacyl-tRNA synthetase family. GluQ subfamily. Zn(2+) is required as a cofactor.

In terms of biological role, catalyzes the tRNA-independent activation of glutamate in presence of ATP and the subsequent transfer of glutamate onto a tRNA(Asp). Glutamate is transferred on the 2-amino-5-(4,5-dihydroxy-2-cyclopenten-1-yl) moiety of the queuosine in the wobble position of the QUC anticodon. This chain is Glutamyl-Q tRNA(Asp) synthetase, found in Synechococcus sp. (strain CC9605).